We begin with the raw amino-acid sequence, 92 residues long: MARSLKKGPFVHYKLEQKVAQNVESGKKAVIKTWSRASMITPDFVGQTIAVHNGKQFVPVYVTENMVGHKLGEFSPTRSFRGHAGAKNKGRK.

Residues 73–92 (EFSPTRSFRGHAGAKNKGRK) are disordered. Basic residues predominate over residues 80–92 (FRGHAGAKNKGRK).

It belongs to the universal ribosomal protein uS19 family.

In terms of biological role, protein S19 forms a complex with S13 that binds strongly to the 16S ribosomal RNA. This is Small ribosomal subunit protein uS19 from Christiangramia forsetii (strain DSM 17595 / CGMCC 1.15422 / KT0803) (Gramella forsetii).